Consider the following 473-residue polypeptide: Serine palmitoyltransferase 1 (473 aa).

Topologically, residues 1–15 (MAMAAEQWVLVEMVQ) are lumenal. Positions 1 to 66 (MAMAAEQWVL…KEELIEEWQP (66 aa)) are interaction with SPTLC2. Residues 16–36 (ALYEAPAYHLILEGILILWII) traverse the membrane as a helical segment. Topologically, residues 37-473 (RLVFSKTYKL…IREAAQAVLL (437 aa)) are cytoplasmic. Tyrosine 164 bears the Phosphotyrosine; by ABL mark.

Belongs to the class-II pyridoxal-phosphate-dependent aminotransferase family. Component of the serine palmitoyltransferase (SPT) complex, which is also composed of SPTLC2 or SPTLC3 and SPTSSA or SPTSSB. The heterodimer with SPTLC2 or SPTLC3 forms the catalytic core of the enzyme, while SPTSSA or SPTSSB subunits determine substrate specificity. SPT also interacts with ORMDL proteins, especially ORMDL3, which negatively regulate SPT activity in the presence of ceramides. Forms dimers of heterodimers with SPTLC2. Interacts with RTN4. Pyridoxal 5'-phosphate is required as a cofactor. In terms of processing, phosphorylation at Tyr-164 inhibits activity and promotes cell survival.

It is found in the endoplasmic reticulum membrane. It carries out the reaction L-serine + hexadecanoyl-CoA + H(+) = 3-oxosphinganine + CO2 + CoA. The enzyme catalyses octadecanoyl-CoA + L-serine + H(+) = 3-oxoeicosasphinganine + CO2 + CoA. The catalysed reaction is tetradecanoyl-CoA + L-serine + H(+) = 3-oxohexadecasphinganine + CO2 + CoA. It catalyses the reaction dodecanoyl-CoA + L-serine + H(+) = 3-oxotetradecasphinganine + CO2 + CoA. The protein operates within lipid metabolism; sphingolipid metabolism. SPT complex catalytic activity is negatively regulated by ORMDL proteins, including ORMDL3, in the presence of ceramides. This mechanism allows to maintain ceramide levels at sufficient concentrations for the production of complex sphingolipids, but which prevents the accumulation of ceramides to levels that trigger apoptosis. Its function is as follows. Component of the serine palmitoyltransferase multisubunit enzyme (SPT) that catalyzes the initial and rate-limiting step in sphingolipid biosynthesis by condensing L-serine and activated acyl-CoA (most commonly palmitoyl-CoA) to form long-chain bases. The SPT complex is also composed of SPTLC2 or SPTLC3 and SPTSSA or SPTSSB. Within this complex, the heterodimer with SPTLC2 or SPTLC3 forms the catalytic core. The composition of the serine palmitoyltransferase (SPT) complex determines the substrate preference. The SPTLC1-SPTLC2-SPTSSA complex shows a strong preference for C16-CoA substrate, while the SPTLC1-SPTLC3-SPTSSA isozyme uses both C14-CoA and C16-CoA as substrates, with a slight preference for C14-CoA. The SPTLC1-SPTLC2-SPTSSB complex shows a strong preference for C18-CoA substrate, while the SPTLC1-SPTLC3-SPTSSB isozyme displays an ability to use a broader range of acyl-CoAs, without apparent preference. Required for adipocyte cell viability and metabolic homeostasis. In Cricetulus griseus (Chinese hamster), this protein is Serine palmitoyltransferase 1 (SPTLC1).